Here is a 333-residue protein sequence, read N- to C-terminus: NADH-quinone oxidoreductase subunit H (333 aa).

The next 8 helical transmembrane spans lie at 15–35 (FFIF…FVTY), 88–108 (FILA…VIPF), 117–137 (IGVG…GVVT), 159–179 (ISYE…AGSL), 191–211 (VWYI…AVAE), 239–259 (WAFF…LITV), 274–296 (IPGA…WFRV), and 313–333 (VLLP…ELFF).

The protein belongs to the complex I subunit 1 family. As to quaternary structure, NDH-1 is composed of 14 different subunits. Subunits NuoA, H, J, K, L, M, N constitute the membrane sector of the complex.

It is found in the cell membrane. It catalyses the reaction a quinone + NADH + 5 H(+)(in) = a quinol + NAD(+) + 4 H(+)(out). In terms of biological role, NDH-1 shuttles electrons from NADH, via FMN and iron-sulfur (Fe-S) centers, to quinones in the respiratory chain. The immediate electron acceptor for the enzyme in this species is believed to be ubiquinone. Couples the redox reaction to proton translocation (for every two electrons transferred, four hydrogen ions are translocated across the cytoplasmic membrane), and thus conserves the redox energy in a proton gradient. This subunit may bind ubiquinone. The protein is NADH-quinone oxidoreductase subunit H of Bacillus thuringiensis subsp. konkukian (strain 97-27).